A 514-amino-acid polypeptide reads, in one-letter code: 2,3-bisphosphoglycerate-independent phosphoglycerate mutase (514 aa).

Mn(2+)-binding residues include Asp-14 and Ser-64. The Phosphoserine intermediate role is filled by Ser-64. Residues His-125, 155-156 (RD), Arg-187, Arg-193, 263-266 (RADR), and Lys-336 each bind substrate. Residues Asp-403, His-407, Asp-444, His-445, and His-463 each coordinate Mn(2+).

The protein belongs to the BPG-independent phosphoglycerate mutase family. As to quaternary structure, monomer. It depends on Mn(2+) as a cofactor.

The enzyme catalyses (2R)-2-phosphoglycerate = (2R)-3-phosphoglycerate. The protein operates within carbohydrate degradation; glycolysis; pyruvate from D-glyceraldehyde 3-phosphate: step 3/5. Catalyzes the interconversion of 2-phosphoglycerate and 3-phosphoglycerate. The protein is 2,3-bisphosphoglycerate-independent phosphoglycerate mutase of Shewanella pealeana (strain ATCC 700345 / ANG-SQ1).